Reading from the N-terminus, the 302-residue chain is Cyclopropane mycolic acid synthase 2 (302 aa).

S-adenosyl-L-methionine contacts are provided by residues 41 to 42 (YS), 76 to 84 (LLDIGCGWG), 102 to 107 (TLSENQ), and 131 to 132 (WE). Cys-284 is an active-site residue.

This sequence belongs to the CFA/CMAS family. As to quaternary structure, homodimer.

Its subcellular location is the cytoplasm. It carries out the reaction a 1-acyl-2-(9Z)-enoyl-sn-glycero-3-phospholipid + S-adenosyl-L-methionine = a 1-acyl-2-(9-cyclopronane)-acyl-sn-glycero-3-phospholipid + S-adenosyl-L-homocysteine + H(+). It functions in the pathway lipid metabolism; mycolic acid biosynthesis. In terms of biological role, catalyzes the formation of trans cyclopropanated ketomycolate or methoxymycolate through the conversion of a double bond to a cyclopropane ring at the proximal position of an oxygenated mycolic acid via the transfer of a methylene group from S-adenosyl-L-methionine. In the absence of MmaA2, CmaA2 has a non-specific cis-cyclopropanating activity and is able to catalyze the conversion of a double bond to a cis cyclopropane ring at the distal position of an alpha mycolic acid. Cyclopropanated mycolic acids are key factors participating in cell envelope permeability, host immunomodulation and persistence. The protein is Cyclopropane mycolic acid synthase 2 (cmaA2) of Mycobacterium bovis (strain ATCC BAA-935 / AF2122/97).